Reading from the N-terminus, the 250-residue chain is Gamma-secretase subunit APH1-like (250 aa).

Transmembrane regions (helical) follow at residues 5–25 (AGIG…VSVI), 29–49 (PFLI…LIIL), 57–77 (LPLK…SVCF), 116–136 (IALA…CLSL), 157–177 (FLIS…SMVI), 191–211 (IIVP…FASE), and 212–232 (GCVI…VHCG).

The protein belongs to the APH-1 family. In terms of assembly, probable component of the gamma-secretase complex, a complex composed of a presenilin homodimer, nicastrin, APH1 and PEN2.

It is found in the membrane. In terms of biological role, probable subunit of the gamma-secretase complex, an endoprotease complex that catalyzes the intramembrane cleavage of integral proteins such as Notch receptors. In Arabidopsis thaliana (Mouse-ear cress), this protein is Gamma-secretase subunit APH1-like.